The chain runs to 138 residues: Superoxide dismutase [Mn] (138 aa).

Residues H1, H49, D133, and H137 each coordinate Mn(2+).

This sequence belongs to the iron/manganese superoxide dismutase family. It depends on Mn(2+) as a cofactor.

The enzyme catalyses 2 superoxide + 2 H(+) = H2O2 + O2. Destroys superoxide anion radicals which are normally produced within the cells and which are toxic to biological systems. The polypeptide is Superoxide dismutase [Mn] (sodA) (Mycobacterium malmoense).